The chain runs to 1588 residues: Pentafunctional AROM polypeptide (1588 aa).

The 3-dehydroquinate synthase stretch occupies residues 1-392 (MVQLAKVPIL…YGDSAQFVSD (392 aa)). NAD(+) contacts are provided by residues 43–45 (DTN), 78–81 (ETSK), 109–111 (GGV), and Asp114. Arg125 is a 7-phospho-2-dehydro-3-deoxy-D-arabino-heptonate binding site. 134-135 (TS) lines the NAD(+) pocket. Residues Asp141 and Lys147 each contribute to the 7-phospho-2-dehydro-3-deoxy-D-arabino-heptonate site. Residue Lys156 coordinates NAD(+). Asn157 serves as a coordination point for 7-phospho-2-dehydro-3-deoxy-D-arabino-heptonate. NAD(+) contacts are provided by residues 174–177 (WLET) and Asn185. Glu189 contacts Zn(2+). 7-phospho-2-dehydro-3-deoxy-D-arabino-heptonate-binding positions include 189 to 192 (EVIK) and Lys258. The active-site Proton acceptor; for 3-dehydroquinate synthase activity is Glu268. Residues 272 to 276 (RNLLN) and His279 each bind 7-phospho-2-dehydro-3-deoxy-D-arabino-heptonate. His279 is a Zn(2+) binding site. His283 functions as the Proton acceptor; for 3-dehydroquinate synthase activity in the catalytic mechanism. His295 and Lys364 together coordinate 7-phospho-2-dehydro-3-deoxy-D-arabino-heptonate. His295 lines the Zn(2+) pocket. Residues 405-871 (VYPFKDIPAD…WDVLHSELGA (467 aa)) form an EPSP synthase region. Cys853 serves as the catalytic For EPSP synthase activity. A shikimate kinase region spans residues 890–1080 (SVVIIGMRAA…IPSGRSAFVC (191 aa)). 895-902 (GMRAAGKT) contributes to the ATP binding site. The 3-dehydroquinase stretch occupies residues 1081–1293 (LTFDDLTEQT…AAPGQLTVAQ (213 aa)). His1198 (proton acceptor; for 3-dehydroquinate dehydratase activity) is an active-site residue. Lys1227 serves as the catalytic Schiff-base intermediate with substrate; for 3-dehydroquinate dehydratase activity. The shikimate dehydrogenase stretch occupies residues 1306 to 1588 (PKELFVVGKP…KAIFDAVTKE (283 aa)).

The protein in the N-terminal section; belongs to the sugar phosphate cyclases superfamily. Dehydroquinate synthase family. In the 2nd section; belongs to the EPSP synthase family. It in the 3rd section; belongs to the shikimate kinase family. This sequence in the 4th section; belongs to the type-I 3-dehydroquinase family. The protein in the C-terminal section; belongs to the shikimate dehydrogenase family. In terms of assembly, homodimer. The cofactor is Zn(2+).

It localises to the cytoplasm. The enzyme catalyses 7-phospho-2-dehydro-3-deoxy-D-arabino-heptonate = 3-dehydroquinate + phosphate. It carries out the reaction 3-dehydroquinate = 3-dehydroshikimate + H2O. The catalysed reaction is shikimate + NADP(+) = 3-dehydroshikimate + NADPH + H(+). It catalyses the reaction shikimate + ATP = 3-phosphoshikimate + ADP + H(+). The enzyme catalyses 3-phosphoshikimate + phosphoenolpyruvate = 5-O-(1-carboxyvinyl)-3-phosphoshikimate + phosphate. Its pathway is metabolic intermediate biosynthesis; chorismate biosynthesis; chorismate from D-erythrose 4-phosphate and phosphoenolpyruvate: step 2/7. It functions in the pathway metabolic intermediate biosynthesis; chorismate biosynthesis; chorismate from D-erythrose 4-phosphate and phosphoenolpyruvate: step 3/7. The protein operates within metabolic intermediate biosynthesis; chorismate biosynthesis; chorismate from D-erythrose 4-phosphate and phosphoenolpyruvate: step 4/7. It participates in metabolic intermediate biosynthesis; chorismate biosynthesis; chorismate from D-erythrose 4-phosphate and phosphoenolpyruvate: step 5/7. Its pathway is metabolic intermediate biosynthesis; chorismate biosynthesis; chorismate from D-erythrose 4-phosphate and phosphoenolpyruvate: step 6/7. Its function is as follows. The AROM polypeptide catalyzes 5 consecutive enzymatic reactions in prechorismate polyaromatic amino acid biosynthesis. The polypeptide is Pentafunctional AROM polypeptide (Saccharomyces cerevisiae (strain Lalvin EC1118 / Prise de mousse) (Baker's yeast)).